A 485-amino-acid chain; its full sequence is Aspartyl/glutamyl-tRNA(Asn/Gln) amidotransferase subunit B (485 aa).

The protein belongs to the GatB/GatE family. GatB subfamily. As to quaternary structure, heterotrimer of A, B and C subunits.

It carries out the reaction L-glutamyl-tRNA(Gln) + L-glutamine + ATP + H2O = L-glutaminyl-tRNA(Gln) + L-glutamate + ADP + phosphate + H(+). The catalysed reaction is L-aspartyl-tRNA(Asn) + L-glutamine + ATP + H2O = L-asparaginyl-tRNA(Asn) + L-glutamate + ADP + phosphate + 2 H(+). Allows the formation of correctly charged Asn-tRNA(Asn) or Gln-tRNA(Gln) through the transamidation of misacylated Asp-tRNA(Asn) or Glu-tRNA(Gln) in organisms which lack either or both of asparaginyl-tRNA or glutaminyl-tRNA synthetases. The reaction takes place in the presence of glutamine and ATP through an activated phospho-Asp-tRNA(Asn) or phospho-Glu-tRNA(Gln). This chain is Aspartyl/glutamyl-tRNA(Asn/Gln) amidotransferase subunit B, found in Cupriavidus pinatubonensis (strain JMP 134 / LMG 1197) (Cupriavidus necator (strain JMP 134)).